We begin with the raw amino-acid sequence, 177 residues long: Large ribosomal subunit protein uL6 (177 aa).

Residues 152-171 are compositionally biased toward basic and acidic residues; that stretch reads RPPEPYKGKGVRYDDEEVRR. Residues 152–177 form a disordered region; that stretch reads RPPEPYKGKGVRYDDEEVRRKEAKKK.

Belongs to the universal ribosomal protein uL6 family. As to quaternary structure, part of the 50S ribosomal subunit.

This protein binds to the 23S rRNA, and is important in its secondary structure. It is located near the subunit interface in the base of the L7/L12 stalk, and near the tRNA binding site of the peptidyltransferase center. This chain is Large ribosomal subunit protein uL6, found in Shewanella sp. (strain ANA-3).